Reading from the N-terminus, the 129-residue chain is Protein Turandot C (129 aa).

Residues 1-21 (MNASISLLCLALLLISPFCLG) form the signal peptide.

This sequence belongs to the Turandot family.

It is found in the secreted. Functionally, a humoral factor that may play a role in stress tolerance. This chain is Protein Turandot C, found in Drosophila melanogaster (Fruit fly).